A 710-amino-acid polypeptide reads, in one-letter code: Polyribonucleotide nucleotidyltransferase (710 aa).

Residues Asp-489 and Asp-495 each contribute to the Mg(2+) site. A KH domain is found at 556-615 (PKIDTIKIDVDKIKVVIGKGGETIDKIIAETGVKIDIDDEGNVSIYSSDQAAIDRTKEII). The 69-residue stretch at 625–693 (GEVYHAKVVR…EKGRVDASMK (69 aa)) folds into the S1 motif domain. The tract at residues 691-710 (SMKALIPRPPKPEKKEEKHD) is disordered. The span at 700–710 (PKPEKKEEKHD) shows a compositional bias: basic and acidic residues.

The protein belongs to the polyribonucleotide nucleotidyltransferase family. Requires Mg(2+) as cofactor.

It is found in the cytoplasm. The enzyme catalyses RNA(n+1) + phosphate = RNA(n) + a ribonucleoside 5'-diphosphate. Functionally, involved in mRNA degradation. Catalyzes the phosphorolysis of single-stranded polyribonucleotides processively in the 3'- to 5'-direction. The polypeptide is Polyribonucleotide nucleotidyltransferase (Streptococcus pyogenes serotype M1).